The sequence spans 162 residues: Endoribonuclease YbeY (162 aa).

Zn(2+) contacts are provided by His117, His121, and His127.

It belongs to the endoribonuclease YbeY family. Zn(2+) is required as a cofactor.

Its subcellular location is the cytoplasm. In terms of biological role, single strand-specific metallo-endoribonuclease involved in late-stage 70S ribosome quality control and in maturation of the 3' terminus of the 16S rRNA. The protein is Endoribonuclease YbeY of Francisella tularensis subsp. novicida (strain U112).